The following is an 89-amino-acid chain: Small ribosomal subunit protein uS14A (89 aa).

It belongs to the universal ribosomal protein uS14 family. Part of the 30S ribosomal subunit. Contacts proteins S3 and S10.

Functionally, binds 16S rRNA, required for the assembly of 30S particles and may also be responsible for determining the conformation of the 16S rRNA at the A site. The chain is Small ribosomal subunit protein uS14A from Listeria welshimeri serovar 6b (strain ATCC 35897 / DSM 20650 / CCUG 15529 / CIP 8149 / NCTC 11857 / SLCC 5334 / V8).